A 218-amino-acid chain; its full sequence is Probable transaldolase (218 aa).

Catalysis depends on Lys87, which acts as the Schiff-base intermediate with substrate.

It belongs to the transaldolase family. Type 3B subfamily.

It localises to the cytoplasm. It catalyses the reaction D-sedoheptulose 7-phosphate + D-glyceraldehyde 3-phosphate = D-erythrose 4-phosphate + beta-D-fructose 6-phosphate. It functions in the pathway carbohydrate degradation; pentose phosphate pathway; D-glyceraldehyde 3-phosphate and beta-D-fructose 6-phosphate from D-ribose 5-phosphate and D-xylulose 5-phosphate (non-oxidative stage): step 2/3. Functionally, transaldolase is important for the balance of metabolites in the pentose-phosphate pathway. In Phocaeicola vulgatus (strain ATCC 8482 / DSM 1447 / JCM 5826 / CCUG 4940 / NBRC 14291 / NCTC 11154) (Bacteroides vulgatus), this protein is Probable transaldolase.